A 137-amino-acid chain; its full sequence is Fatty acid-binding protein homolog 8 (137 aa).

The short motif at 24 to 34 is the Nuclear localization signal element; sequence KEIGVGLLIRK.

Belongs to the calycin superfamily. Fatty-acid binding protein (FABP) family. Monomer. In terms of tissue distribution, intestine.

The protein resides in the lysosome. The protein localises to the nucleus. Lysosomal lipid chaperone which binds to a wide range of unsaturated fatty acids, including high affinity binding to oleic acid and oleoylethanolamide, to transport them into the nucleus. As part of a lysosome-to-nucleus retrograde lipid signaling pathway, translocates into the nucleus where it activates the transcription of genes promoting longevity and activation of mitochondrial beta oxidation. This Caenorhabditis elegans protein is Fatty acid-binding protein homolog 8.